We begin with the raw amino-acid sequence, 391 residues long: Ferrochelatase (391 aa).

Residues His196 and Glu281 each contribute to the Fe cation site.

It belongs to the ferrochelatase family.

It is found in the cytoplasm. It carries out the reaction heme b + 2 H(+) = protoporphyrin IX + Fe(2+). It participates in porphyrin-containing compound metabolism; protoheme biosynthesis; protoheme from protoporphyrin-IX: step 1/1. Its function is as follows. Catalyzes the ferrous insertion into protoporphyrin IX. This chain is Ferrochelatase, found in Prochlorococcus marinus (strain MIT 9215).